The sequence spans 105 residues: Heat shock protein HspQ (105 aa).

This sequence belongs to the HspQ family.

The protein resides in the cytoplasm. Its function is as follows. Involved in the degradation of certain denaturated proteins, including DnaA, during heat shock stress. The polypeptide is Heat shock protein HspQ (Blochmanniella pennsylvanica (strain BPEN)).